Here is a 250-residue protein sequence, read N- to C-terminus: Proteasome subunit alpha type-7-B (250 aa).

Lysine 62 is covalently cross-linked (Glycyl lysine isopeptide (Lys-Gly) (interchain with G-Cter in ubiquitin)).

Belongs to the peptidase T1A family. Component of the 20S core complex of the 26S proteasome. The 26S proteasome is composed of a core protease (CP), known as the 20S proteasome, capped at one or both ends by the 19S regulatory particle (RP/PA700). The 20S proteasome core is composed of 28 subunits that are arranged in four stacked rings, resulting in a barrel-shaped structure. The two end rings are each formed by seven alpha subunits, and the two central rings are each formed by seven beta subunits. The catalytic chamber with the active sites is on the inside of the barrel.

The protein resides in the cytoplasm. It localises to the nucleus. Its function is as follows. The proteasome is a multicatalytic proteinase complex which is characterized by its ability to cleave peptides with Arg, Phe, Tyr, Leu, and Glu adjacent to the leaving group at neutral or slightly basic pH. The proteasome has an ATP-dependent proteolytic activity. This Arabidopsis thaliana (Mouse-ear cress) protein is Proteasome subunit alpha type-7-B (PAD2).